The sequence spans 373 residues: Histidinol-phosphate aminotransferase (373 aa).

Lys230 is subject to N6-(pyridoxal phosphate)lysine.

This sequence belongs to the class-II pyridoxal-phosphate-dependent aminotransferase family. Histidinol-phosphate aminotransferase subfamily. In terms of assembly, homodimer. Pyridoxal 5'-phosphate is required as a cofactor.

It carries out the reaction L-histidinol phosphate + 2-oxoglutarate = 3-(imidazol-4-yl)-2-oxopropyl phosphate + L-glutamate. Its pathway is amino-acid biosynthesis; L-histidine biosynthesis; L-histidine from 5-phospho-alpha-D-ribose 1-diphosphate: step 7/9. The chain is Histidinol-phosphate aminotransferase from Synechococcus sp. (strain ATCC 27144 / PCC 6301 / SAUG 1402/1) (Anacystis nidulans).